The following is a 493-amino-acid chain: Protein LTV1 homolog (493 aa).

3 disordered regions span residues 42–63 (AAARQQKPKDPEPPTDPAQRQE), 97–119 (PNQARKQKVQDSEKPGPAPKLML), and 170–207 (IQAMAEGDSDDEEWDDEDGEEQSDMDFDSDDLNEDENE). The segment covering 176–207 (GDSDDEEWDDEDGEEQSDMDFDSDDLNEDENE) has biased composition (acidic residues). Serine 345, serine 369, serine 370, serine 424, and serine 427 each carry phosphoserine. The tract at residues 359-387 (VIDEPRRSRRSSASTNPAPIQIDPKTGLP) is disordered. The stretch at 437–468 (KDETHEEKKERKRLLKDYRNERRIEKKANTEA) forms a coiled coil. Residues 465-474 (NTEAFKEEKK) show a composition bias toward basic and acidic residues. The interval 465 to 493 (NTEAFKEEKKRQTHVKINQRTNQQGASIV) is disordered. Polar residues predominate over residues 479–493 (VKINQRTNQQGASIV).

Belongs to the LTV1 family. As to quaternary structure, interacts with RpS3; the interaction is RNA-independent. Associates with free 40S ribosome subunits.

Its subcellular location is the cytoplasm. Functionally, necessary for the biogenesis of 40S ribosome subunits by regulating pre-rRNA processing. Non-ribosomal factor required for efficient nuclear export of the ribosomal 40S subunit. Necessary for endoreplication driven by Myc. The chain is Protein LTV1 homolog from Drosophila melanogaster (Fruit fly).